The following is a 205-amino-acid chain: Small ribosomal subunit protein uS4 (205 aa).

Positions 25–48 (KTIEARPTPPGQHGAKNTRRKKSD) are disordered. Residues 94–157 (RRLDNVVFRA…TKLPIVVETL (64 aa)) enclose the S4 RNA-binding domain.

This sequence belongs to the universal ribosomal protein uS4 family. As to quaternary structure, part of the 30S ribosomal subunit. Contacts protein S5. The interaction surface between S4 and S5 is involved in control of translational fidelity.

In terms of biological role, one of the primary rRNA binding proteins, it binds directly to 16S rRNA where it nucleates assembly of the body of the 30S subunit. Functionally, with S5 and S12 plays an important role in translational accuracy. The protein is Small ribosomal subunit protein uS4 of Methylobacillus flagellatus (strain ATCC 51484 / DSM 6875 / VKM B-1610 / KT).